The chain runs to 160 residues: Cyclic pyranopterin monophosphate synthase (160 aa).

Substrate is bound by residues Leu-75–His-77 and Met-113–Glu-114. Asp-128 is a catalytic residue.

This sequence belongs to the MoaC family. As to quaternary structure, homohexamer; trimer of dimers.

It carries out the reaction (8S)-3',8-cyclo-7,8-dihydroguanosine 5'-triphosphate = cyclic pyranopterin phosphate + diphosphate. The protein operates within cofactor biosynthesis; molybdopterin biosynthesis. Its function is as follows. Catalyzes the conversion of (8S)-3',8-cyclo-7,8-dihydroguanosine 5'-triphosphate to cyclic pyranopterin monophosphate (cPMP). This chain is Cyclic pyranopterin monophosphate synthase, found in Haemophilus influenzae (strain PittEE).